A 682-amino-acid polypeptide reads, in one-letter code: DNA-directed RNA polymerase subunit beta' (682 aa).

Residues cysteine 69, cysteine 71, cysteine 87, and cysteine 90 each coordinate Zn(2+). Residues aspartate 489, aspartate 491, and aspartate 493 each coordinate Mg(2+).

The protein belongs to the RNA polymerase beta' chain family. RpoC1 subfamily. In plastids the minimal PEP RNA polymerase catalytic core is composed of four subunits: alpha, beta, beta', and beta''. When a (nuclear-encoded) sigma factor is associated with the core the holoenzyme is formed, which can initiate transcription. Mg(2+) serves as cofactor. It depends on Zn(2+) as a cofactor.

It is found in the plastid. Its subcellular location is the chloroplast. It carries out the reaction RNA(n) + a ribonucleoside 5'-triphosphate = RNA(n+1) + diphosphate. In terms of biological role, DNA-dependent RNA polymerase catalyzes the transcription of DNA into RNA using the four ribonucleoside triphosphates as substrates. The chain is DNA-directed RNA polymerase subunit beta' from Hordeum vulgare (Barley).